Consider the following 97-residue polypeptide: Co-chaperonin GroES (97 aa).

It belongs to the GroES chaperonin family. As to quaternary structure, heptamer of 7 subunits arranged in a ring. Interacts with the chaperonin GroEL.

Its subcellular location is the cytoplasm. Its function is as follows. Together with the chaperonin GroEL, plays an essential role in assisting protein folding. The GroEL-GroES system forms a nano-cage that allows encapsulation of the non-native substrate proteins and provides a physical environment optimized to promote and accelerate protein folding. GroES binds to the apical surface of the GroEL ring, thereby capping the opening of the GroEL channel. This chain is Co-chaperonin GroES, found in Symbiobacterium thermophilum (strain DSM 24528 / JCM 14929 / IAM 14863 / T).